We begin with the raw amino-acid sequence, 1268 residues long: uncharacterized protein (1268 aa).

Positions 191-206 (KIVSVKPSKSSQQVDV) are enriched in low complexity. Disordered regions lie at residues 191–235 (KIVS…SKKK) and 253–273 (NCRSNPKTGNQGGNKGKSKGC). Residues 223–235 (RKPEKSSQDSKKK) show a composition bias toward basic and acidic residues. A CCHC-type zinc finger spans residues 239-256 (PTCFYCNKKGHYATNCRS). Residues 465 to 644 (EMGVIVPITY…KQVTFLGFVD (180 aa)) enclose the Reverse transcriptase domain. Residues 844–997 (VPEAPWKRIH…TPAECHFGRK (154 aa)) enclose the Integrase catalytic domain. The tract at residues 1092–1268 (GDYSRSSVNP…RRERVRTTWR (177 aa)) is disordered. 2 stretches are compositionally biased toward polar residues: residues 1127 to 1143 (VTSNGSSTDVNRGSRIT) and 1160 to 1169 (GSCSPTNNDV). Residues 1208-1221 (PSTSTGTPRGSTST) show a composition bias toward low complexity. Positions 1222–1249 (QLGQASTRNGSRYTASGRNPSCQGNRYS) are enriched in polar residues. A compositionally biased stretch (basic and acidic residues) spans 1257 to 1268 (TARRERVRTTWR).

This is an uncharacterized protein from Caenorhabditis elegans.